We begin with the raw amino-acid sequence, 45 residues long: Movement protein p5 (45 aa).

A helical membrane pass occupies residues 8 to 28 (ILLLVVDFVFVIILLLVLTFV).

The protein localises to the host rough endoplasmic reticulum membrane. Its function is as follows. Transports viral genome to neighboring plant cells directly through plasmosdesmata, without any budding. The movement protein allows efficient cell to cell propagation, by bypassing the host cell wall barrier. Two movement proteins, p6, Hsp70h and three structural proteins, CP, CPm, and P64 are essential for cell-cell movement. Also plays a role in virion formation. Together with CPm and p64, encapsidates the 5'-terminal portion of the viral genome. This Grapevine leafroll-associated virus 3 (isolate United States/NY1) (GLRaV-3) protein is Movement protein p5.